The sequence spans 139 residues: Small ribosomal subunit protein uS19 (139 aa).

This sequence belongs to the universal ribosomal protein uS19 family.

Functionally, protein S19 forms a complex with S13 that binds strongly to the 16S ribosomal RNA. In Methanoregula boonei (strain DSM 21154 / JCM 14090 / 6A8), this protein is Small ribosomal subunit protein uS19.